The following is a 933-amino-acid chain: Serine/threonine-protein kinase PknD (933 aa).

In terms of domain architecture, Protein kinase spans 4–291 (YDIIRMIGKG…ELKDDIEQHL (288 aa)). Residues 10–18 (IGKGGMGEV) and K33 each bind ATP. D138 acts as the Proton acceptor in catalysis.

This sequence belongs to the protein kinase superfamily. Ser/Thr protein kinase family. Autophosphorylated on serine and threonine residues.

It catalyses the reaction L-seryl-[protein] + ATP = O-phospho-L-seryl-[protein] + ADP + H(+). The catalysed reaction is L-threonyl-[protein] + ATP = O-phospho-L-threonyl-[protein] + ADP + H(+). In terms of biological role, together with the serine/threonine kinase Pkn1, may play a role in the specific interactions with host proteins during intracellular growth. This is Serine/threonine-protein kinase PknD from Chlamydia felis (strain Fe/C-56) (Chlamydophila felis).